The chain runs to 205 residues: LexA repressor (205 aa).

The segment at residues 28–48 (RAEIAHKLGFRSANSAEEHLK) is a DNA-binding region (H-T-H motif). Catalysis depends on for autocatalytic cleavage activity residues S122 and K159.

Belongs to the peptidase S24 family. In terms of assembly, homodimer.

The enzyme catalyses Hydrolysis of Ala-|-Gly bond in repressor LexA.. In terms of biological role, represses a number of genes involved in the response to DNA damage (SOS response), including recA and lexA. In the presence of single-stranded DNA, RecA interacts with LexA causing an autocatalytic cleavage which disrupts the DNA-binding part of LexA, leading to derepression of the SOS regulon and eventually DNA repair. The sequence is that of LexA repressor from Idiomarina loihiensis (strain ATCC BAA-735 / DSM 15497 / L2-TR).